A 246-amino-acid polypeptide reads, in one-letter code: Orotidine 5'-phosphate decarboxylase (246 aa).

Residues Asp-22, Lys-44, 71-80 (DLKFHDIPNT), Thr-131, Arg-192, Gln-201, Gly-221, and Arg-222 contribute to the substrate site. Lys-73 acts as the Proton donor in catalysis.

It belongs to the OMP decarboxylase family. Type 1 subfamily. In terms of assembly, homodimer.

It catalyses the reaction orotidine 5'-phosphate + H(+) = UMP + CO2. The protein operates within pyrimidine metabolism; UMP biosynthesis via de novo pathway; UMP from orotate: step 2/2. Catalyzes the decarboxylation of orotidine 5'-monophosphate (OMP) to uridine 5'-monophosphate (UMP). In Enterobacter sp. (strain 638), this protein is Orotidine 5'-phosphate decarboxylase.